A 247-amino-acid polypeptide reads, in one-letter code: Dof zinc finger protein DOF3.5 (247 aa).

Residues 25 to 79 form a Dof-type zinc finger; sequence PSCPRCGSSNTKFCYYNNYSLTQPRYFCKGCRRYWTKGGSLRNVPVGGGCRKSRR. Residues cysteine 27, cysteine 30, cysteine 52, and cysteine 55 each coordinate Zn(2+). Residues 70–100 are disordered; that stretch reads VGGGCRKSRRPKSSSGNNTKTSLTANSGNPG. The segment covering 82-94 has biased composition (polar residues); sequence SSSGNNTKTSLTA.

The protein resides in the nucleus. Functionally, transcription factor that binds specifically to a 5'-AA[AG]G-3' consensus core sequence. The polypeptide is Dof zinc finger protein DOF3.5 (DOF3.5) (Arabidopsis thaliana (Mouse-ear cress)).